Here is a 49-residue protein sequence, read N- to C-terminus: Large ribosomal subunit protein bL33 (49 aa).

Belongs to the bacterial ribosomal protein bL33 family.

This chain is Large ribosomal subunit protein bL33, found in Clostridioides difficile (strain 630) (Peptoclostridium difficile).